The primary structure comprises 73 residues: uncharacterized protein (73 aa).

2 helical membrane-spanning segments follow: residues leucine 4–valine 24 and alanine 51–leucine 71.

It is found in the cell membrane. This is an uncharacterized protein from Escherichia coli O157:H7.